Here is a 133-residue protein sequence, read N- to C-terminus: MSGKGKVHGGKGKSSDSAKASTSHSARAGLQFPVGRIKRYLKRSAQNKVRVGSKSAIYLTAVLEYLTAEVLELAGNAAKDLKVKRITPRHLQLAIRGDEELDNLIKATIAYGGVLPHINKALLLKVEKKKQQK.

Residues 1 to 11 (MSGKGKVHGGK) show a composition bias toward basic residues. Residues 1 to 30 (MSGKGKVHGGKGKSSDSAKASTSHSARAGL) form a disordered region. The residue at position 2 (Ser-2) is an N-acetylserine. N6-acetyllysine occurs at positions 4, 11, and 13. Positions 15–26 (SDSAKASTSHSA) are enriched in low complexity.

Belongs to the histone H2A family. As to quaternary structure, the nucleosome is a histone octamer containing two molecules each of H2A, H2B, H3 and H4 assembled in one H3-H4 heterotetramer and two H2A-H2B heterodimers. The octamer wraps approximately 147 bp of DNA. H2A or its variant H2A.Z forms a heterodimer with H2B. H2A.Z associates with the VPS72/SWC2 subunit of the SWR1 chromatin remodeling complex. Also interacts with RBP1/DNA-directed RNA polymerase II largest subunit. Post-translationally, acetylated once deposited into chromatin.

It is found in the nucleus. It localises to the chromosome. Functionally, variant histone H2A which can replace H2A in some nucleosomes. Nucleosomes wrap and compact DNA into chromatin, limiting DNA accessibility to the cellular machineries which require DNA as a template. Histones thereby play a central role in transcription regulation, DNA repair, DNA replication and chromosomal stability. DNA accessibility is regulated via a complex set of post-translational modifications of histones, also called histone code, and nucleosome remodeling. This variant is enriched at promoters, it may keep them in a repressed state until the appropriate activation signal is received. Near telomeres, it may counteract gene silencing caused by the spread of heterochromatin proteins. Required for the RNA polymerase II and SPT15/TBP recruitment to the target genes. Involved in chromosome stability. The polypeptide is Histone H2A.Z (HTZ1) (Meyerozyma guilliermondii (strain ATCC 6260 / CBS 566 / DSM 6381 / JCM 1539 / NBRC 10279 / NRRL Y-324) (Yeast)).